The following is a 347-amino-acid chain: Quinolinate synthase (347 aa).

Residues His-47 and Ser-68 each contribute to the iminosuccinate site. Cys-113 contributes to the [4Fe-4S] cluster binding site. Residues 139–141 (YAN) and Ser-156 contribute to the iminosuccinate site. Position 200 (Cys-200) interacts with [4Fe-4S] cluster. Iminosuccinate is bound by residues 226 to 228 (HPE) and Thr-243. Cys-297 provides a ligand contact to [4Fe-4S] cluster.

It belongs to the quinolinate synthase family. Type 1 subfamily. [4Fe-4S] cluster is required as a cofactor.

The protein resides in the cytoplasm. The enzyme catalyses iminosuccinate + dihydroxyacetone phosphate = quinolinate + phosphate + 2 H2O + H(+). It participates in cofactor biosynthesis; NAD(+) biosynthesis; quinolinate from iminoaspartate: step 1/1. Functionally, catalyzes the condensation of iminoaspartate with dihydroxyacetone phosphate to form quinolinate. This Shigella boydii serotype 4 (strain Sb227) protein is Quinolinate synthase.